An 836-amino-acid chain; its full sequence is Glutamate receptor ionotropic, kainate glr-3 (836 aa).

An N-terminal signal peptide occupies residues 1–19; it reads MFWIAKTLIAFLILLKTDC. Residues 20–523 are Extracellular-facing; it reads YKIAIPANLI…WFKFMDPLST (504 aa). C76 and C320 are joined by a disulfide. N225, N257, N356, N391, and N419 each carry an N-linked (GlcNAc...) asparagine glycan. L-glutamate contacts are provided by residues 478–480 and R485; that span reads SLT. Residues 524 to 544 form a helical membrane-spanning segment; it reads QVWIMTFASYFVVSVAIWIIA. The Cytoplasmic segment spans residues 545–600; that stretch reads KISPYEQFERDEDNGQYKPVDNQFSLRNSFWFTVCSLMQQGSELCPRAASTRLLTG. A helical membrane pass occupies residues 601–621; that stretch reads IWWFFALILISSYTANLAAVL. Over 622 to 780 the chain is Extracellular; it reads TTRRMETPIE…KRKDQDDGES (159 aa). An L-glutamate-binding site is contributed by 651–652; it reads ST. An N-linked (GlcNAc...) asparagine glycan is attached at N657. E699 contacts L-glutamate. The helical transmembrane segment at 781-801 threads the bilayer; that stretch reads IGGIFIILVVGLVLTAVLVIF. At 802 to 836 the chain is on the cytoplasmic side; that stretch reads ELITTRKPSPAQSQVIRHVNVIPSFKLGFFRWNVN.

Belongs to the glutamate-gated ion channel (TC 1.A.10.1) family. In terms of tissue distribution, expressed in the intestine and in the ASER neuron. Also expressed in the thermosensitive RIA interneuron.

It localises to the cell membrane. Its subcellular location is the postsynaptic cell membrane. Activated by low temperature of 18 degrees Celsius in ASER neuron. In terms of biological role, ionotropic glutamate receptor. Activation by glutamate requires additional verification. L-glutamate acts as an excitatory neurotransmitter at many synapses in the central nervous system. Binding of the excitatory neurotransmitter L-glutamate induces a conformation change, leading to the opening of the cation channel, and thereby converts the chemical signal to an electrical impulse. The receptor then desensitizes rapidly and enters a transient inactive state, characterized by the presence of bound agonist. Independent of its ionotropic glutamate receptor activity, acts as a thermoreceptor in the ASER neuron where it triggers a calcium response to activate cold avoidance behavior in response to temperatures below 19 degrees Celsius. Possibly functions as a metabotropic cold receptor and acts upstream of the G(o) G protein goa-1 in the ASER neuron. Also functions in cold sensing in the intestine. The chain is Glutamate receptor ionotropic, kainate glr-3 from Caenorhabditis elegans.